The following is a 245-amino-acid chain: tRNA1(Val) (adenine(37)-N6)-methyltransferase (245 aa).

The protein belongs to the methyltransferase superfamily. tRNA (adenine-N(6)-)-methyltransferase family.

It is found in the cytoplasm. The catalysed reaction is adenosine(37) in tRNA1(Val) + S-adenosyl-L-methionine = N(6)-methyladenosine(37) in tRNA1(Val) + S-adenosyl-L-homocysteine + H(+). Specifically methylates the adenine in position 37 of tRNA(1)(Val) (anticodon cmo5UAC). The polypeptide is tRNA1(Val) (adenine(37)-N6)-methyltransferase (Escherichia coli O139:H28 (strain E24377A / ETEC)).